The chain runs to 324 residues: NADH-ubiquinone oxidoreductase chain 1 (324 aa).

Transmembrane regions (helical) follow at residues 9-29 (ILNPLAFIVPVLLAVAFLTLL), 43-63 (PNIVGPYGLLQPIADGVKLFI), 75-95 (ILFILTPMLALTLAMTLWAPL), 106-126 (LAILLFVALSSLAVYSILGSG), 146-166 (ISYEVSLGLILLSLIIFTGGF), 177-197 (SIWLIIPAWPLAAMWYISTLA), 228-250 (LFFLAEYANILFMNTLSASLFLG), 259-279 (ELTTMNLMTKAAVLSLVFLWV), and 299-319 (FLPLTLALVIWHLALPITFAG).

This sequence belongs to the complex I subunit 1 family.

It is found in the mitochondrion inner membrane. It catalyses the reaction a ubiquinone + NADH + 5 H(+)(in) = a ubiquinol + NAD(+) + 4 H(+)(out). Functionally, core subunit of the mitochondrial membrane respiratory chain NADH dehydrogenase (Complex I) that is believed to belong to the minimal assembly required for catalysis. Complex I functions in the transfer of electrons from NADH to the respiratory chain. The immediate electron acceptor for the enzyme is believed to be ubiquinone. This chain is NADH-ubiquinone oxidoreductase chain 1 (MT-ND1), found in Tetraodon nigroviridis (Spotted green pufferfish).